We begin with the raw amino-acid sequence, 423 residues long: Glycine-rich protein 1 (423 aa).

The first 20 residues, 1–20 (MKKICLTFVFLLSLFPIYSS), serve as a signal peptide directing secretion. Disordered regions lie at residues 28–47 (TIES…AGPA), 78–133 (DDDN…SKKN), 159–219 (KGGS…GAGA), and 236–288 (GASA…ASAG). The segment covering 31 to 42 (SGSSKSSGSSVG) has biased composition (low complexity). 2 stretches are compositionally biased toward basic and acidic residues: residues 81-93 (NKDK…DGKT) and 102-111 (QNGDDVKSDN). The span at 159 to 172 (KGGSANNGGEGGAT) shows a compositional bias: gly residues. Positions 173–183 (SAGSAGATSGA) are enriched in low complexity. Gly residues-rich tracts occupy residues 205 to 219 (GAGG…GAGA) and 236 to 247 (GASAGAGAGGAQ). The segment covering 248 to 284 (GDAEAASAGSTAGSTSSGGAAASGASSGAGSSDSGQG) has biased composition (low complexity).

Nacreous layer of shell (at protein level).

Its subcellular location is the secreted. This chain is Glycine-rich protein 1, found in Pinctada maxima (Silver-lipped pearl oyster).